The primary structure comprises 250 residues: TBC1 domain family member 26 (250 aa).

Residues 101–250 enclose the Rab-GAP TBC domain; the sequence is VIPLAVRGRA…RCCTSPSQRS (150 aa).

May act as a GTPase-activating protein for Rab family protein(s). The sequence is that of TBC1 domain family member 26 (TBC1D26) from Homo sapiens (Human).